The sequence spans 746 residues: MQKAMKMVKDEDGPLNAAAKSIPSFPHCLQPEASRGKAPQRHPFPEALRGPFSQFRYEPSPGDLDGFPEVFEGGGSRKRKSMPTKVPYTHPAEEASIAQESKSLGPPNLTLLFPQPQRPKCDSQMIDLCNVGLQFYRTLEHLGGKPVKQEPVKPSAMWPQPTPPAFLPAPYPYYPKVHPGLMFPFFVPSSSPFPFSRHTFLPKQPPEPVLPRKVEPLESEETKQKVERVDVNVQIDDSYYVDVGGAQKRWQCPTCEKSYTSKYNLVTHILGHSGIKPHACSRCGKLFKQLSHLHTHMLTHQGTRPHKCQVCHKAFTQTSHLKRHMMQHSEVKPHNCRVCSRGFAYPSELKAHEAKHASGRENICVECGLDFPTLAQLKRHLTTHRGPIQYNCSECDKTFQYPSQLQNHMMKHKDIRPYICSECGMEFVQPHHLKQHSLTHKGVKEHKCGICGREFTLLANMKRHVLIHTNIRAYQCHLCYKSFVQKQTLKAHMIVHSDVKPFKCKLCGKEFNRMHNLMGHLHLHSDSKPFKCLYCPSKFTLKGNLTRHMKVKHGVMERGLHSQGLGRGRLVLVQSAGVLRNLEQEEPFDLSQKRSANGPMFQSDVDSTQDCLCQEEEEEAGEEDNCYEVEPYSPSLAPESQQLCAPEDLSTKQEQTLQDPGEGCRDQDAPEEQQEDRSEDHEGSDIDCEGKDIDCAIREERLSSRLLQSGGQGPSFSDYLYFKHRDEGLKELLERKMEKQAVLLGI.

The segment at 1–64 is disordered; it reads MQKAMKMVKD…FRYEPSPGDL (64 aa). 11 consecutive C2H2-type zinc fingers follow at residues 250-272, 278-300, 306-328, 334-356, 362-384, 390-412, 418-440, 446-468, 474-496, 502-524, and 530-553; these read WQCP…ILGH, HACS…MLTH, HKCQ…MMQH, HNCR…EAKH, NICV…LTTH, YNCS…MMKH, YICS…SLTH, HKCG…VLIH, YQCH…MIVH, FKCK…LHLH, and FKCL…KVKH. Residues 452 to 746 form an interaction with NRIP1 region; that stretch reads GREFTLLANM…MEKQAVLLGI (295 aa). The PXDLS signature appears at 587 to 591; sequence PFDLS. A disordered region spans residues 587 to 689; the sequence is PFDLSQKRSA…DHEGSDIDCE (103 aa). The segment covering 613 to 627 has biased composition (acidic residues); sequence CQEEEEEAGEEDNCY. Basic and acidic residues predominate over residues 675–689; the sequence is EDRSEDHEGSDIDCE.

As to quaternary structure, interacts with ESR1 and NRIP1. Interacts (via PXDLS motif) with CTBP1. In terms of tissue distribution, expressed in immature and mature dendritic cells (DCs).

It is found in the nucleus. In terms of biological role, has transcriptional repression activity. Acts as a corepressor of ESR1; the function seems to involve CTBP1 and histone deacetylases. The sequence is that of Zinc finger protein 366 from Mus musculus (Mouse).